The chain runs to 202 residues: Transcription factor IBH1 (202 aa).

Residues Met-1–Asn-16 show a composition bias toward pro residues. Residues Met-1 to Arg-33 are disordered. The 50-residue stretch at Thr-136–Leu-185 folds into the bHLH domain.

This sequence belongs to the bHLH protein family. As to quaternary structure, interacts with ILI1. Binds to ILI5/BUL1 and BC1. Interacts with BCL1 and BCL2. Highly expressed in roots and at lower levels in leaf blades, leaf sheaths, lamina joint, stems and panicles.

Its function is as follows. Atypical and probable non DNA-binding bHLH transcription factor that acts as a negative regulator of cell elongation and plant development. Binds the transcription factor ILI1 and forms a heterodimer of antagonistic bHLH transcription factors that function downstream of BZR1 to mediate brassinosteroid regulation of cell elongation and lamina inclination. This chain is Transcription factor IBH1, found in Oryza sativa subsp. japonica (Rice).